Consider the following 459-residue polypeptide: MAP kinase-interacting serine/threonine-protein kinase 2 (459 aa).

The interval 37-67 is disordered; sequence DFSPQCEARPDMPSSQPIDIPDAKKRGRKKK. A Nuclear localization signal motif is present at residues 60–66; that stretch reads KKRGRKK. Serine 74 bears the Phosphoserine mark. The Protein kinase domain maps to 84–368; it reads QLQEDVLGEG…AAQVLQHPWV (285 aa). Residues 90-98 and lysine 113 contribute to the ATP site; that span reads LGEGAHARV. 160–162 contributes to the staurosporine binding site; it reads EKM. Aspartate 205 serves as the catalytic Proton acceptor. Position 209 (glutamate 209) interacts with staurosporine. Phosphothreonine is present on residues threonine 244 and threonine 249. Residues cysteine 299, cysteine 311, and cysteine 314 each coordinate Zn(2+). Position 379 is a phosphothreonine (threonine 379). Serine 431 and serine 434 each carry phosphoserine. Residues 438–442 carry the MAP kinase binding motif; that stretch reads LAQRR. Serine 446 carries the phosphoserine modification. Position 450 is a phosphothreonine (threonine 450).

Belongs to the protein kinase superfamily. CAMK Ser/Thr protein kinase family. In terms of assembly, interacts with ESR2 and EIF4E in the nucleus. Monomer. Interacts with the C-terminal regions of EIF4G1 and EIF4G2; this interaction is promoted when MAPK pathways are repressed but repressed upon ERK proteins activation. Also binds to dephosphorylated MAPK3/ERK1 and MAPK1/ERK2. Interaction with phosphorylated MAPK3/ERK1 and MAPK1/ERK2 protects it from dephosphorylation and inactivation. Mg(2+) serves as cofactor. The cofactor is Zn(2+). In terms of processing, dual phosphorylation of Thr-244 and Thr-249 activates the kinase. Phosphorylation of Thr-379 activates the kinase. Phosphorylated upon arsenic trioxide As(2)O(3) treatment. Phosphorylated by MAPK1/ERK2, MAPK11 and MAPK14. Dephosphorylated by PP2A. Ubiquitously expressed in all tissues examined, with high levels in skeletal muscle and low levels in brain.

Its subcellular location is the cytoplasm. It localises to the nucleus. The protein localises to the PML body. It catalyses the reaction L-seryl-[protein] + ATP = O-phospho-L-seryl-[protein] + ADP + H(+). The enzyme catalyses L-threonyl-[protein] + ATP = O-phospho-L-threonyl-[protein] + ADP + H(+). Inhibited by CGP57380 and staurosporine. Serine/threonine-protein kinase that phosphorylates SFPQ/PSF, HNRNPA1 and EIF4E. May play a role in the response to environmental stress and cytokines. Appears to regulate translation by phosphorylating EIF4E, thus increasing the affinity of this protein for the 7-methylguanosine-containing mRNA cap. Required for mediating PP2A-inhibition-induced EIF4E phosphorylation. Triggers EIF4E shuttling from cytoplasm to nucleus. Enhances the formation of EIF4F complex in pachytene spermatocytes, thus promoting mRNA translation during spermatogenesis. Displays a high basal kinase activity. Acts as a mediator of the suppressive effects of IFNgamma on hematopoiesis. Negative regulator for signals that control generation of arsenic trioxide As(2)O(3)-dependent apoptosis and anti-leukemic responses. Involved in anti-apoptotic signaling in response to serum withdrawal. This is MAP kinase-interacting serine/threonine-protein kinase 2 (Mknk2) from Mus musculus (Mouse).